A 354-amino-acid polypeptide reads, in one-letter code: Guanine nucleotide-binding protein G(i) subunit alpha-3 (354 aa).

The N-myristoyl glycine moiety is linked to residue G2. Residue C3 is the site of S-palmitoyl cysteine attachment. The 323-residue stretch at 32–354 (KEVKLLLLGA…KNNLKECGLY (323 aa)) folds into the G-alpha domain. The G1 motif stretch occupies residues 35–48 (KLLLLGAGESGKST). Positions 42, 43, 44, 45, 46, 47, 48, 150, 151, 175, 176, 177, 178, 179, 180, 181, 201, 203, 269, 270, 272, 273, 325, 326, and 327 each coordinate GTP. S47 provides a ligand contact to Mg(2+). Positions 173-181 (DVLRTRVKT) are G2 motif. Residue T181 coordinates Mg(2+). Residues 196–205 (FKMFDVGGQR) are G3 motif. The G4 motif stretch occupies residues 265 to 272 (ILFLNKKD). Positions 324–329 (TCATDT) are G5 motif.

It belongs to the G-alpha family. G(i/o/t/z) subfamily. In terms of assembly, heterotrimeric G proteins are composed of 3 units; alpha, beta and gamma. The alpha subunit contains the guanine nucleotide binding site. GTP binding causes dissociation of the heterotrimer, liberating the individual subunits so that they can interact with downstream effector proteins. Forms a complex with CCDC88A/GIV and EGFR which leads to enhanced EGFR signaling and triggering of cell migration; ligand stimulation is required for recruitment of GNAI3 to the complex. Interacts (inactive GDP-bound form) with CCDC88A/GIV (via GBA motif); the interaction leads to activation of GNAI3. Interacts (inactive GDP-bound form) with CCDC88C/DAPLE (via GBA motif); the interaction leads to activation of GNAI3. Interacts (inactive GDP-bound form) with NUCB1 (via GBA motif) and NUCB2 (via GBA motif); the interaction leads to activation of GNAI3. Interacts (inactive GDP-bound form) with PLCD4 (via GBA motif); the interaction leads to activation of GNAI3. Interacts with INSR; the interaction is probably mediated by CCDC88A/GIV. Interacts with GPSM1. Interacts (GDP-bound form) with GPSM2 (via GoLoco domains). Does not interact with RGS2. Interacts with RGS8 and RGS10; this strongly enhances the intrinsic GTPase activity. Interacts with RGS16; this strongly enhances the intrinsic GTPase activity. Interacts with RGS12. Interacts (via active GTP- or inactive GDP-bound form) with RGS14. Interacts (via active GTP-bound form) with TRPC5 (via ANK repeats) in a homotetrameric ion channel; the interaction is direct and activates the channel activity. In terms of tissue distribution, ubiquitously expressed.

Its subcellular location is the cytoplasm. The protein localises to the cell membrane. The protein resides in the cytoskeleton. It is found in the microtubule organizing center. It localises to the centrosome. Functionally, heterotrimeric guanine nucleotide-binding proteins (G proteins) function as transducers downstream of G protein-coupled receptors (GPCRs) in numerous signaling cascades. The alpha chain contains the guanine nucleotide binding site and alternates between an active, GTP-bound state and an inactive, GDP-bound state. Signaling by an activated GPCR promotes GDP release and GTP binding. The alpha subunit has a low GTPase activity that converts bound GTP to GDP, thereby terminating the signal. Both GDP release and GTP hydrolysis are modulated by numerous regulatory proteins. Signaling is mediated via effector proteins, such as adenylate cyclase. Inhibits adenylate cyclase activity, leading to decreased intracellular cAMP levels. Stimulates the activity of receptor-regulated K(+) channels. The active GTP-bound form prevents the association of RGS14 with centrosomes and is required for the translocation of RGS14 from the cytoplasm to the plasma membrane. May play a role in cell division. The active GTP-bound form activates the calcium permeant TRPC5 ion channels. The polypeptide is Guanine nucleotide-binding protein G(i) subunit alpha-3 (GNAI3) (Cavia porcellus (Guinea pig)).